Consider the following 157-residue polypeptide: Ubiquitin-like protein 4A (157 aa).

The Ubiquitin-like domain occupies 1-76 (MQLTVKALQG…LNLVVKPLEK (76 aa)). Lys48 participates in a covalent cross-link: Glycyl lysine isopeptide (Lys-Gly) (interchain with G-Cter in ubiquitin). Ser90 is subject to Phosphoserine. A required and sufficient for interaction with BAG6 region spans residues 96-138 (WQLISKVLARHFSAADASRVLEQLQRDYERSLSRLTLDDIERL).

In terms of assembly, component of the BAG6/BAT3 complex, at least composed of BAG6, UBL4A and GET4/TRC35. Interacts with BAG6; the interaction is direct and required for UBL4A protein stability. Interacts with USP13; may be indirect via BAG6. Polyubiquitinated. Ubiquitination by AMFR and deubiquitination by USP13 may regulate the interaction between the BAG6/BAT complex and SGTA and therefore may regulate client proteins fate.

The protein localises to the cytoplasm. Its subcellular location is the cytosol. It localises to the nucleus. Functionally, as part of a cytosolic protein quality control complex, the BAG6/BAT3 complex, maintains misfolded and hydrophobic patches-containing proteins in a soluble state and participates in their proper delivery to the endoplasmic reticulum or alternatively can promote their sorting to the proteasome where they undergo degradation. The BAG6/BAT3 complex is involved in the post-translational delivery of tail-anchored/type II transmembrane proteins to the endoplasmic reticulum membrane. Recruited to ribosomes, it interacts with the transmembrane region of newly synthesized tail-anchored proteins and together with SGTA and ASNA1 mediates their delivery to the endoplasmic reticulum. Client proteins that cannot be properly delivered to the endoplasmic reticulum are ubiquitinated and sorted to the proteasome. Similarly, the BAG6/BAT3 complex also functions as a sorting platform for proteins of the secretory pathway that are mislocalized to the cytosol either delivering them to the proteasome for degradation or to the endoplasmic reticulum. The BAG6/BAT3 complex also plays a role in the endoplasmic reticulum-associated degradation (ERAD), a quality control mechanism that eliminates unwanted proteins of the endoplasmic reticulum through their retrotranslocation to the cytosol and their targeting to the proteasome. It maintains these retrotranslocated proteins in an unfolded yet soluble state condition in the cytosol to ensure their proper delivery to the proteasome. The chain is Ubiquitin-like protein 4A (UBL4A) from Callithrix jacchus (White-tufted-ear marmoset).